The following is a 184-amino-acid chain: Major fimbrial subunit (184 aa).

Residues 1-22 (MKLSKIALAAALVFGINSVATA) form the signal peptide. Cysteines 49 and 88 form a disulfide.

Belongs to the fimbrial protein family.

Its subcellular location is the fimbrium. Its function is as follows. Major structural component of PMF fimbriae. The protein is Major fimbrial subunit (pmfA) of Proteus mirabilis (strain HI4320).